Here is a 149-residue protein sequence, read N- to C-terminus: MAEIEQSMIDEMKDGFPLFDNKGDGKIDGAQLGDVLRSFGLNPSNAEVEKIAKANEGKRLSFDDYLAIHKQVLGQGEVGSYEDFFEGLKLFDKEGTGLISGAELRHVLATLGEKLTEAQVDELMAGGGGQEDAEGNVNYDTFAKYLMLG.

EF-hand domains follow at residues S7–N42 and G79–K114.

In terms of assembly, myosin is a hexamer of 2 heavy chains and 4 light chains (two regulatory light chains and two essential light chains).

In Branchiostoma floridae (Florida lancelet), this protein is Myosin, essential light chain.